We begin with the raw amino-acid sequence, 105 residues long: Protein METHYLENE BLUE SENSITIVITY 1 (105 aa).

The tract at residues 26–46 (RGGGKAGIADRTGKEKGGHAK) is disordered. Basic and acidic residues predominate over residues 36-46 (RTGKEKGGHAK).

As to expression, mainly expressed in the epidermis.

The protein localises to the nucleus. Its subcellular location is the cytoplasm. It is found in the stress granule. Required for acclimation to reactive oxygen species (ROS) responses downstream of beta-cyclocitral (beta-cc) or mediated by dihydroactinidiolide, including singlet oxygen 1O(2) detoxification reactions, especially upon light-mediated photooxidative stress, and leading to programmed cell death. Prevents leaf senescence. Involved in cold acclimation. The protein is Protein METHYLENE BLUE SENSITIVITY 1 of Arabidopsis thaliana (Mouse-ear cress).